The primary structure comprises 196 residues: ATP-dependent Clp protease proteolytic subunit (196 aa).

Ser96 (nucleophile) is an active-site residue. The active site involves His121.

The protein belongs to the peptidase S14 family. In terms of assembly, fourteen ClpP subunits assemble into 2 heptameric rings which stack back to back to give a disk-like structure with a central cavity, resembling the structure of eukaryotic proteasomes.

The protein localises to the cytoplasm. The catalysed reaction is Hydrolysis of proteins to small peptides in the presence of ATP and magnesium. alpha-casein is the usual test substrate. In the absence of ATP, only oligopeptides shorter than five residues are hydrolyzed (such as succinyl-Leu-Tyr-|-NHMec, and Leu-Tyr-Leu-|-Tyr-Trp, in which cleavage of the -Tyr-|-Leu- and -Tyr-|-Trp bonds also occurs).. Functionally, cleaves peptides in various proteins in a process that requires ATP hydrolysis. Has a chymotrypsin-like activity. Plays a major role in the degradation of misfolded proteins. The polypeptide is ATP-dependent Clp protease proteolytic subunit (Streptococcus sanguinis (strain SK36)).